Consider the following 269-residue polypeptide: Formamidopyrimidine-DNA glycosylase (269 aa).

Proline 2 (schiff-base intermediate with DNA) is an active-site residue. Glutamate 3 functions as the Proton donor in the catalytic mechanism. The Proton donor; for beta-elimination activity role is filled by lysine 57. Residues histidine 90, arginine 109, and lysine 150 each coordinate DNA. The FPG-type zinc finger occupies arginine 235–lysine 269. Arginine 259 serves as the catalytic Proton donor; for delta-elimination activity.

This sequence belongs to the FPG family. As to quaternary structure, monomer. The cofactor is Zn(2+).

The enzyme catalyses Hydrolysis of DNA containing ring-opened 7-methylguanine residues, releasing 2,6-diamino-4-hydroxy-5-(N-methyl)formamidopyrimidine.. The catalysed reaction is 2'-deoxyribonucleotide-(2'-deoxyribose 5'-phosphate)-2'-deoxyribonucleotide-DNA = a 3'-end 2'-deoxyribonucleotide-(2,3-dehydro-2,3-deoxyribose 5'-phosphate)-DNA + a 5'-end 5'-phospho-2'-deoxyribonucleoside-DNA + H(+). Its function is as follows. Involved in base excision repair of DNA damaged by oxidation or by mutagenic agents. Acts as a DNA glycosylase that recognizes and removes damaged bases. Has a preference for oxidized purines, such as 7,8-dihydro-8-oxoguanine (8-oxoG). Has AP (apurinic/apyrimidinic) lyase activity and introduces nicks in the DNA strand. Cleaves the DNA backbone by beta-delta elimination to generate a single-strand break at the site of the removed base with both 3'- and 5'-phosphates. In Pectobacterium carotovorum subsp. carotovorum (strain PC1), this protein is Formamidopyrimidine-DNA glycosylase.